Consider the following 160-residue polypeptide: Protein cornichon homolog 3 (160 aa).

Residues 1 to 10 lie on the Cytoplasmic side of the membrane; it reads MAFTFAAFCY. Residues 11 to 31 form a helical membrane-spanning segment; the sequence is MLSLVLCAALIFFAIWHIIAF. The Lumenal segment spans residues 32–72; it reads DELRTDFKSPIDQCNPVHARERLRNIERICFLLRKLVLPEY. The chain crosses the membrane as a helical span at residues 73-93; it reads SIHSLFCIMFLCAQEWLTLGL. Residues 94–138 lie on the Cytoplasmic side of the membrane; that stretch reads NVPLLFYHFWRYFHCPADSSELAYDPPVVMNADTLSYCQKEAWCK. The chain crosses the membrane as a helical span at residues 139–159; the sequence is LAFYLLSFFYYLYCMIYTLVS. Position 160 (serine 160) is a topological domain, lumenal.

This sequence belongs to the cornichon family. Acts as an auxiliary subunit for AMPA-selective glutamate receptors (AMPARs). Found in a complex with GRIA1, GRIA2, GRIA3, GRIA4, CNIH2, CACNG2, CACNG3, CACNG4, CACNG5, CACNG7 and CACNG8. As to expression, expression is up-regulated in dorsolateral prefrontal cortex of patients with schizophrenia (postmortem brain study).

It localises to the postsynaptic cell membrane. Regulates the trafficking and gating properties of AMPA-selective glutamate receptors (AMPARs). Promotes their targeting to the cell membrane and synapses and modulates their gating properties by regulating their rates of activation, deactivation and desensitization. This Homo sapiens (Human) protein is Protein cornichon homolog 3 (CNIH3).